A 403-amino-acid chain; its full sequence is G2/mitotic-specific cyclin-B1 (403 aa).

The protein belongs to the cyclin family. Cyclin AB subfamily. In terms of assembly, interacts with the CDC2 protein kinase to form a serine/threonine kinase holoenzyme complex also known as maturation promoting factor (MPF). The cyclin subunit imparts substrate specificity to the complex.

Its function is as follows. Essential for the control of the cell cycle at the G2/M (mitosis) transition. The polypeptide is G2/mitotic-specific cyclin-B1 (ccnb1) (Anguilla japonica (Japanese eel)).